The sequence spans 448 residues: High mobility group B protein 15 (448 aa).

Residues 29 to 120 (VADPRLFMTS…LLNNYEQIYF (92 aa)) form the ARID domain. Residues 219–236 (PQQSHGVLPNTLNISANP) show a composition bias toward polar residues. Disordered stretches follow at residues 219-270 (PQQS…RSGY), 333-352 (KKNG…LPEQ), and 366-448 (VEED…AEQN). Positions 244–255 (TKRRRRRKKSEI) are enriched in basic residues. The segment at residues 263 to 330 (PKPNRSGYNF…RYRTEMEDYR (68 aa)) is a DNA-binding region (HMG box). The span at 389-398 (SIETDPELEE) shows a compositional bias: acidic residues. The span at 399–412 (PSLNPSGPNLNPNP) shows a compositional bias: low complexity.

It belongs to the HMGB family.

The protein resides in the nucleus. Its function is as follows. Binds preferentially DNA with A/T-rich content. The polypeptide is High mobility group B protein 15 (HMGB15) (Arabidopsis thaliana (Mouse-ear cress)).